Here is a 56-residue protein sequence, read N- to C-terminus: Putative zinc-binding protein YnfU (56 aa).

Zn(2+)-binding residues include Cys-19, Cys-22, Cys-41, and Cys-44.

Zn(2+) is required as a cofactor.

The polypeptide is Putative zinc-binding protein YnfU (Escherichia coli (strain K12)).